Reading from the N-terminus, the 246-residue chain is 23S rRNA (guanosine-2'-O-)-methyltransferase RlmB (246 aa).

Gly197, Ile217, and Leu226 together coordinate S-adenosyl-L-methionine.

Belongs to the class IV-like SAM-binding methyltransferase superfamily. RNA methyltransferase TrmH family. RlmB subfamily.

It is found in the cytoplasm. The catalysed reaction is guanosine(2251) in 23S rRNA + S-adenosyl-L-methionine = 2'-O-methylguanosine(2251) in 23S rRNA + S-adenosyl-L-homocysteine + H(+). In terms of biological role, specifically methylates the ribose of guanosine 2251 in 23S rRNA. In Haemophilus influenzae (strain ATCC 51907 / DSM 11121 / KW20 / Rd), this protein is 23S rRNA (guanosine-2'-O-)-methyltransferase RlmB.